The chain runs to 419 residues: 5-methylthioadenosine/S-adenosylhomocysteine deaminase (419 aa).

Zn(2+)-binding residues include His-58 and His-60. Substrate is bound by residues Glu-87 and His-179. A Zn(2+)-binding site is contributed by His-206. Positions 209 and 294 each coordinate substrate. Position 294 (Asp-294) interacts with Zn(2+).

The protein belongs to the metallo-dependent hydrolases superfamily. MTA/SAH deaminase family. Zn(2+) serves as cofactor.

The enzyme catalyses S-adenosyl-L-homocysteine + H2O + H(+) = S-inosyl-L-homocysteine + NH4(+). It catalyses the reaction S-methyl-5'-thioadenosine + H2O + H(+) = S-methyl-5'-thioinosine + NH4(+). Its function is as follows. Catalyzes the deamination of 5-methylthioadenosine and S-adenosyl-L-homocysteine into 5-methylthioinosine and S-inosyl-L-homocysteine, respectively. Is also able to deaminate adenosine. This chain is 5-methylthioadenosine/S-adenosylhomocysteine deaminase, found in Pyrococcus furiosus (strain ATCC 43587 / DSM 3638 / JCM 8422 / Vc1).